The primary structure comprises 221 residues: F-box protein At1g55000 (221 aa).

Residues 7–46 form the F-box domain; the sequence is DTLIIIFQKLTVADLARASCVCKVWNSVATEDDLVVSAFT. A LysM domain is found at 74 to 118; it reads ISHRICRGDSVTSLAVKYAVQVMDIKRLNNMMSDHGIYSRDRLLI.

Part of a SCF (ASK-cullin-F-box) protein ligase complex. Interacts with SKP1A/ASK1, SKP1B/ASK2, ASK4, ASK11 and ASK13.

The protein operates within protein modification; protein ubiquitination. Component of SCF(ASK-cullin-F-box) E3 ubiquitin ligase complexes, which may mediate the ubiquitination and subsequent proteasomal degradation of target proteins. In Arabidopsis thaliana (Mouse-ear cress), this protein is F-box protein At1g55000.